The primary structure comprises 370 residues: Alanine racemase (370 aa).

Lys-39 (proton acceptor; specific for D-alanine) is an active-site residue. Lys-39 bears the N6-(pyridoxal phosphate)lysine mark. Residue Arg-137 coordinates substrate. Catalysis depends on Tyr-258, which acts as the Proton acceptor; specific for L-alanine. Substrate is bound at residue Met-306.

This sequence belongs to the alanine racemase family. It depends on pyridoxal 5'-phosphate as a cofactor.

It catalyses the reaction L-alanine = D-alanine. Its pathway is amino-acid biosynthesis; D-alanine biosynthesis; D-alanine from L-alanine: step 1/1. Its function is as follows. Catalyzes the interconversion of L-alanine and D-alanine. May also act on other amino acids. The polypeptide is Alanine racemase (alr) (Methylobacterium nodulans (strain LMG 21967 / CNCM I-2342 / ORS 2060)).